The following is a 666-amino-acid chain: LEAF RUST 10 DISEASE-RESISTANCE LOCUS RECEPTOR-LIKE PROTEIN KINASE-like 2.5 (666 aa).

The N-terminal stretch at 1-30 is a signal peptide; the sequence is MINFSLSLTKSMSYSFIWMLFVIHISCVLS. At 31 to 275 the chain is on the extracellular side; that stretch reads ADGNHILCSP…PTRNKVILKL (245 aa). Residues asparagine 119, asparagine 141, asparagine 171, and asparagine 198 are each glycosylated (N-linked (GlcNAc...) asparagine). Residues 276 to 296 traverse the membrane as a helical segment; that stretch reads FFIVIYVLGIGAASFAMMGVI. Over 297-666 the chain is Cytoplasmic; sequence LVVTCLNCLI…YTEICSINVA (370 aa). One can recognise a Protein kinase domain in the interval 348-636; the sequence is KSFAEVIGKG…ALEVPPRPVL (289 aa). ATP-binding positions include 354 to 362 and lysine 376; that span reads IGKGGFGTV. Tyrosine 420 is modified (phosphotyrosine). The Proton acceptor role is filled by aspartate 471. Phosphothreonine is present on residues threonine 508 and threonine 511.

It belongs to the protein kinase superfamily. Ser/Thr protein kinase family.

It localises to the membrane. It carries out the reaction L-seryl-[protein] + ATP = O-phospho-L-seryl-[protein] + ADP + H(+). The catalysed reaction is L-threonyl-[protein] + ATP = O-phospho-L-threonyl-[protein] + ADP + H(+). The chain is LEAF RUST 10 DISEASE-RESISTANCE LOCUS RECEPTOR-LIKE PROTEIN KINASE-like 2.5 from Arabidopsis thaliana (Mouse-ear cress).